Consider the following 145-residue polypeptide: Mitochondrial import receptor subunit TOM20 homolog (145 aa).

Residues 1 to 6 are Mitochondrial intermembrane-facing; sequence MVGRNS. A helical membrane pass occupies residues 7–24; that stretch reads AIAAGVCGALFIGYCIYF. Residues 25 to 145 lie on the Cytoplasmic side of the membrane; that stretch reads DRKRRSDPNF…AQSLAEDDVE (121 aa). Residues Lys35, Lys56, Lys61, and Lys68 each participate in a glycyl lysine isopeptide (Lys-Gly) (interchain with G-Cter in ubiquitin) cross-link. Phosphoserine is present on residues Ser135 and Ser138.

The protein belongs to the Tom20 family. Forms part of the preprotein translocase complex of the outer mitochondrial membrane (TOM complex) which consists of at least 7 different proteins (TOMM5, TOMM6, TOMM7, TOMM20, TOMM22, TOMM40 and TOMM70). Interacts with TOM22. Interacts with APEX1. Interacts with TBC1D21. Upon mitochondrial depolarization, interacts with PINK1; the interaction is required for PINK1-TOM-TIM23 supercomplex formation which is critical for PINK1 stabilization at the outer mitochondrial membrane, kinase activation and downstream mitophagy. Ubiquitinated by PRKN during mitophagy, leading to its degradation and enhancement of mitophagy. Deubiquitinated by USP30. As to expression, expressed in brain, kidney, stomach, colon, jejunum, ileum, testis, ovary and oviduct (at protein level). In the brain, expressed in neural cells of the cerebrum and cerebellum (at protein level). In the kidney, expressed in the proximal to distal tubule in the cortex and the outer and inner zones of the medulla (at protein level). In the stomach, expressed in the basal layer of stratified squamous epithelia in the forestomach and in the gastric pit and fundic gland of the glandular stomach (at protein level). Expressed in epithelial cells of the jejunum, ileum, and colon (at protein level). In the testis, expressed by spermatocytes and spermatogonia (at protein level). In the ovaries, expressed by follicular epithelial cells and corpus luteum cells (at protein level). In the oviduct, expressed in the epithelia of the isthmus and the ciliated cells of the ampulla (at protein level). Expressed in the sperm midpiece (at protein level).

It localises to the mitochondrion outer membrane. Central component of the receptor complex responsible for the recognition and translocation of cytosolically synthesized mitochondrial preproteins. Together with TOM22 functions as the transit peptide receptor at the surface of the mitochondrion outer membrane and facilitates the movement of preproteins into the TOM40 translocation pore. Required for the translocation across the mitochondrial outer membrane of cytochrome P450 monooxygenases. The chain is Mitochondrial import receptor subunit TOM20 homolog (Tomm20) from Mus musculus (Mouse).